Reading from the N-terminus, the 376-residue chain is Erythronate-4-phosphate dehydrogenase (376 aa).

The substrate site is built by Ser45 and Thr67. An NAD(+)-binding site is contributed by Asp147. Arg209 is an active-site residue. Asp233 contributes to the NAD(+) binding site. Glu238 is a catalytic residue. The active-site Proton donor is the His255. Gly258 is a binding site for NAD(+). Residue Tyr259 coordinates substrate.

Belongs to the D-isomer specific 2-hydroxyacid dehydrogenase family. PdxB subfamily. As to quaternary structure, homodimer.

The protein localises to the cytoplasm. The catalysed reaction is 4-phospho-D-erythronate + NAD(+) = (R)-3-hydroxy-2-oxo-4-phosphooxybutanoate + NADH + H(+). It functions in the pathway cofactor biosynthesis; pyridoxine 5'-phosphate biosynthesis; pyridoxine 5'-phosphate from D-erythrose 4-phosphate: step 2/5. Its function is as follows. Catalyzes the oxidation of erythronate-4-phosphate to 3-hydroxy-2-oxo-4-phosphonooxybutanoate. The sequence is that of Erythronate-4-phosphate dehydrogenase from Shewanella sp. (strain MR-7).